Consider the following 645-residue polypeptide: Cell pattern formation-associated protein stuA (645 aa).

The interval 1–52 is disordered; the sequence is MNQMQPYADVHQPHMSTAAHAPASGPPAGLSHYSYPHQPSMMQPQQQQHQYG. Over residues 18–52 the composition is skewed to low complexity; that stretch reads AAHAPASGPPAGLSHYSYPHQPSMMQPQQQQHQYG. Residues 124–230 enclose the HTH APSES-type domain; sequence RVTATLWEDE…HDIGALLYHP (107 aa). A DNA-binding region (H-T-H motif) is located at residues 158–179; sequence GTKLLNVAGMTRGRRDGILKSE. The segment at 246–645 is disordered; sequence VDRNRRPDSM…HTLAAQRARR (400 aa). Composition is skewed to polar residues over residues 254 to 271 and 279 to 288; these read SMQT…SQAP and MTNSVGSAMS. Over residues 317-330 the composition is skewed to low complexity; that stretch reads SASSMMGMGNQGSS. The segment covering 336–365 has biased composition (polar residues); sequence ANVQQHPQGNQPLSIDTGLSNARSVPTTPA. Over residues 469 to 481 the composition is skewed to low complexity; it reads PYNGNRGPYGYNP. Composition is skewed to polar residues over residues 502 to 542 and 569 to 584; these read SPHQ…NLYN and YASQ…NSSG. A nuclear localization domain region spans residues 585–613; that stretch reads KRGRDEEDAETYRPDSVQGDDMGGLKRRK. Residues 586–597 show a composition bias toward basic and acidic residues; it reads RGRDEEDAETYR.

Belongs to the EFG1/PHD1/stuA family.

The protein localises to the nucleus. Its function is as follows. Transcription factor that regulates asexual reproduction. Binds the StuA-response elements (StRE) with the consensus sequence 5'-(A/T)CGCG(T/A)N(A/C)-3' at the promoters of target genes. Regulates the expression of several effector genes (AvrLm1, AvrLm6 and AvrLm4-7) during infection stage. The polypeptide is Cell pattern formation-associated protein stuA (Leptosphaeria maculans (strain JN3 / isolate v23.1.3 / race Av1-4-5-6-7-8) (Blackleg fungus)).